Here is a 593-residue protein sequence, read N- to C-terminus: MARSDDADSRAARWEKEAHDLSTQVAFLQEELALVRRKLTESPRQVRQLEERLAAAQAQLARLTENNERLVSTLKEARAQIVTLKEEIDRLAQPPSGYGVFLARHDDGTVDVFTGGRKLRVAVSPSLEVADLRRGQEVLLNDALNIVDAFGYERAGEVVMLKEVLAGPDGAPGDRALVVSHSDEERVVHLAETLIDAPIRAGDSLMIEPRSAYAYERIPKSEVEELVLEEVPDVDYTDIGGLHAQIEQIRDAVELPFLHADLFREHQLRPPKGILLYGPPGCGKTLIAKAVANSLAKKIAERRGEEKHTSYFLNIKGPELLNKYVGETERHIRLVFQRAREKAGEGTPVIVFFDEMDSVFRTRGSGVSSDVENTIVPQLLSEIDGVEGLENVIVIGASNREDMIDPAILRPGRLDVKIKIERPDAEAAKDIFSKYILPGLPLHPDDLAEHDSDPQATVAAMIDAVVLRMYSETEENRFLEVTYANGDKDVLYFKDFNSGAMIQNIVDRGKKMAIKEFLTSARKGMRLQHLLDACVDEFRENEDLPNTTNPDDWARISGKKGERIVYIRTLVSGGKGADAGRSIETASNTGQYL.

Positions 5–94 form a coiled coil; that stretch reads DDADSRAARW…KEEIDRLAQP (90 aa). 281–286 contacts ATP; it reads GCGKTL. The disordered stretch occupies residues 574–593; the sequence is GKGADAGRSIETASNTGQYL. Over residues 584 to 593 the composition is skewed to polar residues; it reads ETASNTGQYL. The segment at 592–593 is docks into pockets in the proteasome alpha-ring; it reads YL.

This sequence belongs to the AAA ATPase family. In terms of assembly, homohexamer. Assembles into a hexameric ring structure that caps the 20S proteasome core. Strongly interacts with the prokaryotic ubiquitin-like protein Pup through a hydrophobic interface; the interacting region of ARC lies in its N-terminal coiled-coil domain. There is one Pup binding site per ARC hexamer ring. Upon ATP-binding, the C-terminus of ARC interacts with the alpha-rings of the proteasome core, possibly by binding to the intersubunit pockets.

The protein operates within protein degradation; proteasomal Pup-dependent pathway. In terms of biological role, ATPase which is responsible for recognizing, binding, unfolding and translocation of pupylated proteins into the bacterial 20S proteasome core particle. May be essential for opening the gate of the 20S proteasome via an interaction with its C-terminus, thereby allowing substrate entry and access to the site of proteolysis. Thus, the C-termini of the proteasomal ATPase may function like a 'key in a lock' to induce gate opening and therefore regulate proteolysis. The polypeptide is Proteasome-associated ATPase (Salinispora tropica (strain ATCC BAA-916 / DSM 44818 / JCM 13857 / NBRC 105044 / CNB-440)).